We begin with the raw amino-acid sequence, 530 residues long: T-complex protein 1 subunit delta (530 aa).

A compositionally biased stretch (polar residues) spans 1–13; the sequence is MVSQAKQPSNATF. Residues 1 to 20 are disordered; sequence MVSQAKQPSNATFKNREKPQ.

It belongs to the TCP-1 chaperonin family. In terms of assembly, heterooligomeric complex of about 850 to 900 kDa that forms two stacked rings, 12 to 16 nm in diameter.

Its subcellular location is the cytoplasm. Molecular chaperone; assists the folding of proteins upon ATP hydrolysis. Known to play a role, in vitro, in the folding of actin and tubulin. This chain is T-complex protein 1 subunit delta (CCT4), found in Kluyveromyces lactis (strain ATCC 8585 / CBS 2359 / DSM 70799 / NBRC 1267 / NRRL Y-1140 / WM37) (Yeast).